Here is a 522-residue protein sequence, read N- to C-terminus: DEAD-box ATP-dependent RNA helicase 1 (522 aa).

A Q motif motif is present at residues 30–59 (CALDTLPCLNPKLKKALENMGISSLFPVQV). The region spanning 66–297 (IGPGGFERDI…QLDLHHPLFM (232 aa)) is the Helicase ATP-binding domain. Position 79–86 (79–86 (SPTGSGKT)) interacts with ATP. The short motif at 207-210 (DETD) is the DEAD box element. The region spanning 325–475 (YLVALLKSWE…PIPPTSLDSI (151 aa)) is the Helicase C-terminal domain. Positions 490 to 522 (VESEAPKKGRQAFRHNSRTGNSQTKLNKPRSEA) are disordered. The span at 497 to 506 (KGRQAFRHNS) shows a compositional bias: basic residues.

This sequence belongs to the DEAD box helicase family. DDX51/DBP6 subfamily.

The enzyme catalyses ATP + H2O = ADP + phosphate + H(+). The chain is DEAD-box ATP-dependent RNA helicase 1 (RH1) from Arabidopsis thaliana (Mouse-ear cress).